A 212-amino-acid polypeptide reads, in one-letter code: Prolactin (212 aa).

The signal sequence occupies residues 1-24; the sequence is MAHRETNGSKLFITVLCMVAACSA. 2 disulfide bridges follow: C70/C185 and C202/C212.

The protein belongs to the somatotropin/prolactin family.

It is found in the secreted. This is Prolactin (prl) from Sparus aurata (Gilthead sea bream).